Here is a 413-residue protein sequence, read N- to C-terminus: Alpha-1-antitrypsin-like protein CM55-ST (413 aa).

The N-terminal stretch at 1 to 24 (MPSSISWGLLLLAALSCLGPGSLA) is a signal peptide. Q25 is subject to Pyrrolidone carboxylic acid. Residues N65, N102, N165, and N266 are each glycosylated (N-linked (GlcNAc...) asparagine). The RCL stretch occupies residues 368–387 (GGTVLGNIRSTLRYEVIFDR).

It belongs to the serpin family. Expressed in liver.

This Tamias sibiricus (Siberian chipmunk) protein is Alpha-1-antitrypsin-like protein CM55-ST.